Reading from the N-terminus, the 236-residue chain is Terpene cyclase andB (236 aa).

7 consecutive transmembrane segments (helical) span residues 13–33 (TVVNLLGSASGIGWILNYILM), 45–65 (MSMLPLCCNIAWEFVYGILCP), 70–90 (VVRPVILSWLVLNCLVVYAAI), 106–126 (HLPLLFTVGIAACTGFHIALI), 135–155 (FLWSARSCQVLLSIGGLFQLL), 166–186 (VLWLSRFLGSICGVLKMTLMW), and 200–220 (LTAYCIALWIISDVLYGVVFY).

It belongs to the paxB family.

The protein resides in the membrane. It functions in the pathway secondary metabolite biosynthesis; terpenoid biosynthesis. Its function is as follows. Terpene cyclase; part of the gene cluster that mediates the biosynthesis of anditomin, a fungal meroterpenoid. The first step of the pathway is the synthesis of 3,5-dimethylorsellinic acid (DMOA) by the polyketide synthase andM. DMOA is then converted to the phthalide compound 5,7-dihydroxy-4,6-dimethylphthalide (DHDMP) by the cytochrome P450 monooxygenase andK, which is further prenylated by the prenyltransferase andD to yield farnesyl-DHDMP. Further epoxidation by the FAD-dependent monooxygenase andE leads to epoxyfarnesyl-DHDMP. The next step involves the terpene cyclase andB that converts epoxyfarnesyl-DHDMP into preandiloid A through opening of the epoxide ring followed by the cyclization of the farnesyl moiety. Preandiloid A is in turn oxidized at the C-3 hydroxyl group to yield preandiloid B by the dehydrogenase andC. The dioxygenase andA is solely responsible for the dehydrogenation of preandiloid B leading to the enone preandiloid C, as well as for the intriguing structural rearrangement to generate the bicyclo[2.2.2]octane core, transforming preandiloid C into andiconin. FAD-binding monooxygenase andJ then produces andilesin D which is reduced by dehydrogenase andI to yield andilesin A. Action of acetyltransferase andG followed by a spontaneous acetate elimination leads then to andilesin B, which is in turn substrate of the short chain dehydrogenase andH to yield andilesin C. Finally, the dioxygenase andF catalyzes the transformation of andilesin C to anditomin. The protein is Terpene cyclase andB of Emericella variicolor (Aspergillus stellatus).